Here is a 376-residue protein sequence, read N- to C-terminus: Chaperone protein DnaJ (376 aa).

The 65-residue stretch at 5–69 (DYYEVLGISK…QKRAQYDQYG (65 aa)) folds into the J domain. The CR-type zinc-finger motif lies at 133 to 215 (GKDAEIEIPR…CHGKGRVTKT (83 aa)). Positions 146, 149, 163, 166, 189, 192, 203, and 206 each coordinate Zn(2+). CXXCXGXG motif repeat units lie at residues 146 to 153 (CDTCHGSG), 163 to 170 (CSHCGGKG), 189 to 196 (CQYCNGTG), and 203 to 210 (CPTCHGKG).

Belongs to the DnaJ family. Homodimer. It depends on Zn(2+) as a cofactor.

It is found in the cytoplasm. Its function is as follows. Participates actively in the response to hyperosmotic and heat shock by preventing the aggregation of stress-denatured proteins and by disaggregating proteins, also in an autonomous, DnaK-independent fashion. Unfolded proteins bind initially to DnaJ; upon interaction with the DnaJ-bound protein, DnaK hydrolyzes its bound ATP, resulting in the formation of a stable complex. GrpE releases ADP from DnaK; ATP binding to DnaK triggers the release of the substrate protein, thus completing the reaction cycle. Several rounds of ATP-dependent interactions between DnaJ, DnaK and GrpE are required for fully efficient folding. Also involved, together with DnaK and GrpE, in the DNA replication of plasmids through activation of initiation proteins. This chain is Chaperone protein DnaJ, found in Listeria monocytogenes serotype 4a (strain HCC23).